The sequence spans 265 residues: 3-methyl-2-oxobutanoate hydroxymethyltransferase (265 aa).

Mg(2+) contacts are provided by D45 and D84. Residues 45 to 46 (DS), D84, and K112 contribute to the 3-methyl-2-oxobutanoate site. E114 lines the Mg(2+) pocket. The active-site Proton acceptor is the E181.

Belongs to the PanB family. In terms of assembly, homodecamer; pentamer of dimers. Mg(2+) serves as cofactor.

Its subcellular location is the cytoplasm. It catalyses the reaction 3-methyl-2-oxobutanoate + (6R)-5,10-methylene-5,6,7,8-tetrahydrofolate + H2O = 2-dehydropantoate + (6S)-5,6,7,8-tetrahydrofolate. Its pathway is cofactor biosynthesis; (R)-pantothenate biosynthesis; (R)-pantoate from 3-methyl-2-oxobutanoate: step 1/2. Its function is as follows. Catalyzes the reversible reaction in which hydroxymethyl group from 5,10-methylenetetrahydrofolate is transferred onto alpha-ketoisovalerate to form ketopantoate. The sequence is that of 3-methyl-2-oxobutanoate hydroxymethyltransferase from Yersinia enterocolitica serotype O:8 / biotype 1B (strain NCTC 13174 / 8081).